An 88-amino-acid polypeptide reads, in one-letter code: Class II hydrophobin 5 (88 aa).

The signal sequence occupies residues 1-14; it reads MQFLVLALASLAAA. Disulfide bonds link Cys-27-Cys-73, Cys-35-Cys-64, Cys-36-Cys-48, and Cys-74-Cys-85.

Belongs to the cerato-ulmin hydrophobin family. Homotetramer. Further self-assembles to form highly ordered films at water-air interfaces through intermolecular interactions. In terms of tissue distribution, only appears on young aerial hyphae. HCf-5 is the most abundant transcript in sporulating mycelium.

It localises to the secreted. The protein localises to the cell wall. In terms of biological role, aerial growth, conidiation, and dispersal of filamentous fungi in the environment rely upon a capability of their secreting small amphipathic proteins called hydrophobins (HPBs) with low sequence identity. Class I can self-assemble into an outermost layer of rodlet bundles on aerial cell surfaces, conferring cellular hydrophobicity that supports fungal growth, development and dispersal; whereas Class II form highly ordered films at water-air interfaces through intermolecular interactions but contribute nothing to the rodlet structure. The polypeptide is Class II hydrophobin 5 (Passalora fulva (Tomato leaf mold)).